A 478-amino-acid polypeptide reads, in one-letter code: F-box/kelch-repeat protein At1g51550 (478 aa).

The segment at 1 to 20 (MAAESTRNSSPPSTSQSSSP) is disordered. Low complexity predominate over residues 9 to 20 (SSPPSTSQSSSP). The F-box domain occupies 18 to 64 (SSPIINLPDDHLLTILLLLPVDSILSFSMTCKRYKSLACSDSLWEAL). Kelch repeat units follow at residues 135–187 (LVLF…VIGE) and 246–299 (KMVV…CIRE).

In Arabidopsis thaliana (Mouse-ear cress), this protein is F-box/kelch-repeat protein At1g51550.